Here is a 204-residue protein sequence, read N- to C-terminus: Neurensin-2 (204 aa).

The next 2 membrane-spanning stretches (helical) occupy residues 66–86 and 122–142; these read LSSG…GYAV and LCVA…IGWL. A disordered region spans residues 178 to 204; it reads SGQSWFSPPASPFGQSSVQTIQPKRDS. Residues 190-204 show a composition bias toward polar residues; it reads FGQSSVQTIQPKRDS.

The protein belongs to the VMP family.

It localises to the membrane. Its function is as follows. May play a role in maintenance and/or transport of vesicles. This Homo sapiens (Human) protein is Neurensin-2 (NRSN2).